Here is a 639-residue protein sequence, read N- to C-terminus: Wall-associated receptor kinase-like 15 (639 aa).

The N-terminal stretch at 1-25 (MELPWLSLTTFTLSLLIYFSSTTQA) is a signal peptide. Over 26–282 (FKRCPNCGST…KRKSCKRWSN (257 aa)) the chain is Extracellular. 5 N-linked (GlcNAc...) asparagine glycosylation sites follow: Asn-68, Asn-115, Asn-126, Asn-141, and Asn-241. Residues 283-303 (LPLLGGLAGGVGAILIAGFIT) form a helical membrane-spanning segment. Topologically, residues 304–639 (KTIVSKQNRR…KEIENILHGI (336 aa)) are cytoplasmic. The Protein kinase domain maps to 354–639 (FAKSNLLGFG…KEIENILHGI (286 aa)). Residues 360-368 (LGFGGFGEV) and Lys-382 contribute to the ATP site. Asp-484 serves as the catalytic Proton acceptor.

It belongs to the protein kinase superfamily. Ser/Thr protein kinase family.

The protein localises to the membrane. The enzyme catalyses L-seryl-[protein] + ATP = O-phospho-L-seryl-[protein] + ADP + H(+). It carries out the reaction L-threonyl-[protein] + ATP = O-phospho-L-threonyl-[protein] + ADP + H(+). Functionally, putative serine/threonine-protein kinase that may function as a signaling receptor of extracellular matrix component. The sequence is that of Wall-associated receptor kinase-like 15 (WAKL15) from Arabidopsis thaliana (Mouse-ear cress).